We begin with the raw amino-acid sequence, 234 residues long: MRFLRGFVFSLAFTLYKVTATAEIGSEINVENEAPPDGLSWEEWHMDHEHQLKDYTPETFFALHDIKKKGFLDENDILSLYGLNREEIVGAGDGMGQHDESEKIDNEMAKRVVSLIMRLLDVDDNTKITKEEYLQFAKRGNKFPDLGVGVGHHSDFELEYEIHHWNKFHKDKDPDVKVVHKEDIEHELLHHEHEIEHEEEIQRGASRATVITDDELESRIELKNIPEKFKNGIF.

The signal sequence occupies residues 1 to 22; the sequence is MRFLRGFVFSLAFTLYKVTATA. EF-hand domains are found at residues 52–87 and 108–143; these read LKDY…NREE and MAKR…GNKF. Position 212 is a phosphothreonine (T212).

The protein is Protein SSP120 (SSP120) of Saccharomyces cerevisiae (strain ATCC 204508 / S288c) (Baker's yeast).